A 366-amino-acid polypeptide reads, in one-letter code: Glycerol-3-phosphate dehydrogenase [NAD(+)], glycosomal (366 aa).

NAD(+) contacts are provided by residues G22–G27, F97, K125, and A157. Substrate is bound at residue K125. K210 acts as the Proton acceptor in catalysis. NAD(+) is bound by residues R274, V298, and E300. A substrate-binding site is contributed by R274–N275. The short motif at S364–L366 is the Microbody targeting signal element.

Belongs to the NAD-dependent glycerol-3-phosphate dehydrogenase family. In terms of assembly, homodimer.

Its subcellular location is the glycosome. It catalyses the reaction sn-glycerol 3-phosphate + NAD(+) = dihydroxyacetone phosphate + NADH + H(+). The protein is Glycerol-3-phosphate dehydrogenase [NAD(+)], glycosomal (GPD) of Leishmania mexicana.